Reading from the N-terminus, the 589-residue chain is Arginine--tRNA ligase (589 aa).

Residues 123-133 (ANVAKPMHVGH) carry the 'HIGH' region motif.

The protein belongs to the class-I aminoacyl-tRNA synthetase family. As to quaternary structure, monomer.

The protein localises to the cytoplasm. The catalysed reaction is tRNA(Arg) + L-arginine + ATP = L-arginyl-tRNA(Arg) + AMP + diphosphate. The sequence is that of Arginine--tRNA ligase from Hyphomonas neptunium (strain ATCC 15444).